Here is a 452-residue protein sequence, read N- to C-terminus: 23S rRNA (uracil(1939)-C(5))-methyltransferase RlmD (452 aa).

Residues 1 to 57 (METEVNVAEISALDYEGRGVTKVGGKTVFIKGALPSERVGFRIVRQKKQFDEAEAVA) enclose the TRAM domain. 4 residues coordinate [4Fe-4S] cluster: Cys70, Cys76, Cys79, and Cys157. Residues Gln269, Phe298, Asn303, Glu319, Asn347, and Asp368 each coordinate S-adenosyl-L-methionine. The active-site Nucleophile is the Cys395.

It belongs to the class I-like SAM-binding methyltransferase superfamily. RNA M5U methyltransferase family. RlmD subfamily.

The enzyme catalyses uridine(1939) in 23S rRNA + S-adenosyl-L-methionine = 5-methyluridine(1939) in 23S rRNA + S-adenosyl-L-homocysteine + H(+). In terms of biological role, catalyzes the formation of 5-methyl-uridine at position 1939 (m5U1939) in 23S rRNA. This chain is 23S rRNA (uracil(1939)-C(5))-methyltransferase RlmD, found in Neisseria lactamica (strain 020-06).